The following is a 748-amino-acid chain: Structure-specific endonuclease subunit SLX4 (748 aa).

A disordered region spans residues 50 to 102 (LSSDDDSISTQVKSVTAQKSPITQETTKNDTERNKDVDKSCNPVSTSQPDLGE). Positions 57 to 75 (ISTQVKSVTAQKSPITQET) are enriched in polar residues. Threonine 72 carries the phosphothreonine; by ATR and ATM modification. Basic and acidic residues predominate over residues 76–88 (TKNDTERNKDVDK). Threonine 113 is modified (phosphothreonine; by ATR and ATM). 2 disordered regions span residues 215-236 (IKTQ…KGEK) and 277-303 (EKSS…PPEL). Residues 222 to 236 (NSDKPPRARNNKGEK) show a composition bias toward basic and acidic residues. Residues 277 to 291 (EKSSSSLDNQESSQQ) show a composition bias toward low complexity. Serine 289 carries the phosphoserine; by ATR and ATM modification. Phosphothreonine; by ATR and ATM is present on threonine 319. Phosphoserine; by ATR and ATM is present on residues serine 329 and serine 355.

It belongs to the SLX4 family. Forms a heterodimer with SLX1. Interacts with RAD1; catalytic subunit of the RAD1-RAD10 endonuclease. Interacts with RTT107. In terms of processing, phosphorylated by ATR (MEC1) and ATM (TEL1) upon DNA damage. This appears to be required for the function with the RAD1-RAD10 endonuclease.

It is found in the nucleus. The protein localises to the cytoplasm. Its function is as follows. Regulatory subunit that interacts with and increases the activity of different structure-specific endonucleases. Has several distinct roles in protecting genome stability by resolving diverse forms of deleterious DNA structures. Component of the SLX1-SLX4 structure-specific endonuclease that resolves DNA secondary structures generated during DNA repair and recombination. Has endonuclease activity towards branched DNA substrates, introducing single-strand cuts in duplex DNA close to junctions with ss-DNA. Has a preference for simple Y, 5'-flap and replication fork-like structures. It cleaves the strand bearing the 5'-non-homologous arm at the branch site junction and generates ligatable, nicked products from the 5'-flap or replication fork substrates. Plays a critical role in maintaining the integrity of the ribosomal DNA (rDNA) loci, where it has a role in re-starting stalled replication forks. Has Holliday junction resolvase activity in vitro. Interacts with the structure-specific RAD1-RAD10 endonuclease and promotes RAD1-RAD10-dependent 3'-non-homologous tail removal (NHTR) during repair of double-strand breaks by single-strand annealing. SLX4 also promotes recovery from DNA-alkylation-induced replisome stalling during DNA replication by facilitating the error-free mode of lesion bypass. This does not require SLX1 or RAD1-RAD10, but probably RTT107. The polypeptide is Structure-specific endonuclease subunit SLX4 (Saccharomyces cerevisiae (strain YJM789) (Baker's yeast)).